The sequence spans 518 residues: Anthranilate synthase component 1 (518 aa).

L-tryptophan is bound by residues S41 and 291–293 (PYM). 328 to 329 (GS) lines the chorismate pocket. E361 contributes to the Mg(2+) binding site. Chorismate contacts are provided by residues Y449, R469, 483–485 (GCG), and G485. Position 498 (E498) interacts with Mg(2+).

The protein belongs to the anthranilate synthase component I family. In terms of assembly, heterotetramer consisting of two non-identical subunits: a beta subunit (TrpG) and a large alpha subunit (TrpE). Requires Mg(2+) as cofactor.

The catalysed reaction is chorismate + L-glutamine = anthranilate + pyruvate + L-glutamate + H(+). Its pathway is amino-acid biosynthesis; L-tryptophan biosynthesis; L-tryptophan from chorismate: step 1/5. With respect to regulation, feedback inhibited by tryptophan. In terms of biological role, part of a heterotetrameric complex that catalyzes the two-step biosynthesis of anthranilate, an intermediate in the biosynthesis of L-tryptophan. In the first step, the glutamine-binding beta subunit (TrpG) of anthranilate synthase (AS) provides the glutamine amidotransferase activity which generates ammonia as a substrate that, along with chorismate, is used in the second step, catalyzed by the large alpha subunit of AS (TrpE) to produce anthranilate. In the absence of TrpG, TrpE can synthesize anthranilate directly from chorismate and high concentrations of ammonia. The sequence is that of Anthranilate synthase component 1 (trpE) from Haemophilus influenzae (strain ATCC 51907 / DSM 11121 / KW20 / Rd).